The following is a 199-amino-acid chain: Urease accessory protein UreG (199 aa).

Position 8 to 15 (8 to 15 (GPVGSGKT)) interacts with GTP.

This sequence belongs to the SIMIBI class G3E GTPase family. UreG subfamily. As to quaternary structure, homodimer. UreH, UreF and UreG form a complex that acts as a GTP-hydrolysis-dependent molecular chaperone, activating the urease apoprotein by helping to assemble the nickel containing metallocenter of UreC. The UreE protein probably delivers the nickel.

It localises to the cytoplasm. Its function is as follows. Facilitates the functional incorporation of the urease nickel metallocenter. This process requires GTP hydrolysis, probably effectuated by UreG. The sequence is that of Urease accessory protein UreG from Helicobacter pylori (strain G27).